A 189-amino-acid polypeptide reads, in one-letter code: Inosine triphosphate pyrophosphatase (189 aa).

14–19 (TGNQNK) provides a ligand contact to ITP. Mg(2+) is bound at residue Glu-42. ITP is bound by residues Lys-54, 70–71 (DT), Lys-87, 146–149 (FGWD), Lys-167, and 172–173 (HR).

It belongs to the HAM1 NTPase family. In terms of assembly, homodimer. It depends on Mg(2+) as a cofactor. Mn(2+) serves as cofactor.

It is found in the cytoplasm. The protein localises to the nucleus. The enzyme catalyses ITP + H2O = IMP + diphosphate + H(+). It catalyses the reaction dITP + H2O = dIMP + diphosphate + H(+). The catalysed reaction is XTP + H2O = XMP + diphosphate + H(+). Functionally, pyrophosphatase that hydrolyzes non-canonical purine nucleotides such as inosine triphosphate (ITP), deoxyinosine triphosphate (dITP) or xanthosine 5'-triphosphate (XTP) to their respective monophosphate derivatives. The enzyme does not distinguish between the deoxy- and ribose forms. Probably excludes non-canonical purines from RNA and DNA precursor pools, thus preventing their incorporation into RNA and DNA and avoiding chromosomal lesions. In Pyricularia oryzae (strain 70-15 / ATCC MYA-4617 / FGSC 8958) (Rice blast fungus), this protein is Inosine triphosphate pyrophosphatase.